The sequence spans 239 residues: MICOS complex subunit mic25a (239 aa).

A lipid anchor (N-myristoyl glycine) is attached at glycine 2. 2 disordered regions span residues valine 27–tyrosine 88 and aspartate 113–lysine 133. The segment covering asparagine 50 to proline 78 has biased composition (polar residues). The span at aspartate 79 to tyrosine 88 shows a compositional bias: basic and acidic residues. Residues aspartate 79–glutamate 166 are a coiled coil. Residues glutamate 192 to leucine 234 form the CHCH domain. 2 consecutive short sequence motifs (cx9C motif) follow at residues cysteine 195 to cysteine 205 and cysteine 216 to cysteine 226. 2 disulfide bridges follow: cysteine 195/cysteine 226 and cysteine 205/cysteine 216.

This sequence belongs to the MICOS complex subunit Mic19 family. Metazoan Mic25 subfamily. As to quaternary structure, component of the mitochondrial contact site and cristae organizing system (MICOS) complex (also known as MINOS or MitOS complex).

It localises to the mitochondrion inner membrane. In terms of biological role, component of the MICOS complex, a large protein complex of the mitochondrial inner membrane that plays crucial roles in the maintenance of crista junctions, inner membrane architecture, and formation of contact sites to the outer membrane. The polypeptide is MICOS complex subunit mic25a (chchd6a) (Danio rerio (Zebrafish)).